Consider the following 142-residue polypeptide: Alpha-lactalbumin (142 aa).

An N-terminal signal peptide occupies residues 1–19; it reads MMSFVSLLLVGILFHATQA. Residues 20–142 enclose the C-type lysozyme domain; that stretch reads EQLTKCEVFQ…KLDQWLCEKL (123 aa). 4 disulfide bridges follow: C25–C139, C47–C130, C80–C96, and C92–C110. N64 and N93 each carry an N-linked (GlcNAc...) asparagine glycan. Residues K98, D101, D103, D106, and D107 each contribute to the Ca(2+) site.

The protein belongs to the glycosyl hydrolase 22 family. As to quaternary structure, lactose synthase (LS) is a heterodimer of a catalytic component, beta1,4-galactosyltransferase (beta4Gal-T1) and a regulatory component, alpha-lactalbumin (LA). Mammary gland specific. Secreted in milk.

The protein resides in the secreted. In terms of biological role, regulatory subunit of lactose synthase, changes the substrate specificity of galactosyltransferase in the mammary gland making glucose a good acceptor substrate for this enzyme. This enables LS to synthesize lactose, the major carbohydrate component of milk. In other tissues, galactosyltransferase transfers galactose onto the N-acetylglucosamine of the oligosaccharide chains in glycoproteins. The sequence is that of Alpha-lactalbumin (LALBA) from Ovis aries (Sheep).